We begin with the raw amino-acid sequence, 526 residues long: Plant intracellular Ras-group-related LRR protein 5 (526 aa).

LRR repeat units lie at residues L229–L252, I253–L275, L276–R297, L298–L321, S323–C344, S346–L367, S368–M390, A391–K414, L416–N437, L438–N463, and R465–K484. The GVYW; degenerate motif lies at G485–Y492.

The protein belongs to the SHOC2 family. In terms of tissue distribution, widely expressed but preferentially in roots.

Its function is as follows. Leucine-rich repeat protein that likely mediates protein interactions, possibly in the context of signal transduction. The chain is Plant intracellular Ras-group-related LRR protein 5 (PIRL5) from Arabidopsis thaliana (Mouse-ear cress).